A 594-amino-acid polypeptide reads, in one-letter code: MSLRFNLIVTPFSNYEIRNRRETFPVQKFLMTTSKSAIKVKCSLKTSIDLVGKIREKINGKVDNSLEVPTINYLVDIPSNLCMIDSLERLGVARYFQSEIDGVLEKTYRLWQQREKDIFADVTCRAMAFRFLRVKGYEVSSDELAPYADQVHVNPQISDVTTVVELYRASQVRIYEEDSILEKLHAWTSTFLKQQLQSKTISDKKLHEQVEYYLKNYHGIQNQVAVRRSLDLYDIDHYPILKVADRFRIIYNEDFFVFLRQDFNLCQAQHQKELQQLQRWYEDCRLDTLNYGRNVVHVSCFLAAANFGDPELSNARLAFAKTIVLVTRIDDFFDLAGSREESYKILELVKEWKEKPTEDYGSKEVEILFTALYDTVNEFAEIAYIEQGRCVKPLLIKLWVELLTSFKKELDSWTDDTALTLDEYLSSAWMSIACRVCTLTALQFLGVKLSEEMLSSQECTDLCRHLSFVNRLLNDVQTFERERKENTINAVSVLLAAHRHERAITEEEAISKIQEIVEQNRRKLMRMVYQRESVFPRKCRNVFLEVSKMGHYLYASGDELTTPQQLMEDMKSLVFEPLALHPLETNNVIASGKN.

Positions 330, 334, 474, 477, and 482 each coordinate Mg(2+). Positions 330–334 (DDFFD) match the DDXXD motif motif.

Belongs to the terpene synthase family. It depends on Mg(2+) as a cofactor. Mostly expressed in trichomes of leaves and fruits.

It localises to the plastid. Its subcellular location is the chloroplast. The enzyme catalyses peregrinol diphosphate = labd-13(16),14-diene-9-ol + diphosphate. The catalysed reaction is 9alpha-copalyl diphosphate = syn-isopimara-7,15-diene + diphosphate. It participates in secondary metabolite biosynthesis; terpenoid biosynthesis. In terms of biological role, involved in the biosynthesis of labdane-type diterpenoid including cleroda-dienols, and peregrinol lactones and furan derivatives, dopaminergic diterpenoids that can bind to dopamine receptors in the human pituitary gland, have probably ability to lower prolactin levels, and are used to treat menstrual cycle disorders (e.g. premenstrual syndrome and mastodynia). Terpene synthase the catalyzes the conversion of peregrinol diphosphate to labda-13(16),14-dien-9-ol, and of syn-copalyl diphosophate to dehydroabietadiene and syn-isopimara-7,15-diene. The chain is Class I diterpene synthase TPS6, chloroplastic from Vitex agnus-castus (Chaste tree).